A 360-amino-acid polypeptide reads, in one-letter code: Magnesium transporter NIPA2 (360 aa).

At 1-9 the chain is on the extracellular side; it reads MSQGHGKYD. A helical membrane pass occupies residues 10 to 30; that stretch reads FYIGLGLAMSSSIFIGGSFIL. At 31 to 56 the chain is on the cytoplasmic side; the sequence is KKKGLLRLARKGSTRAGQGGHAYLKE. Residues 57-77 form a helical membrane-spanning segment; the sequence is WLWWAGLLSMGAGEVANFAAY. Position 78 (alanine 78) is a topological domain, extracellular. The helical transmembrane segment at 79-99 threads the bilayer; that stretch reads FAPATLVTPLGALSVLVSAIL. The Cytoplasmic segment spans residues 100-107; it reads SSYFLNER. Residues 108-128 traverse the membrane as a helical segment; the sequence is LNLHGKIGCLLSILGSTVMVI. Over 129-149 the chain is Extracellular; sequence HAPKEEEIETLNEMSHKLGDP. A helical transmembrane segment spans residues 150–170; sequence GFVVFATLVVIVSLILIFVVG. The Cytoplasmic segment spans residues 171-175; the sequence is PRHGQ. A helical transmembrane segment spans residues 176 to 196; the sequence is TNILVYITICSVIGAVSVSCA. Topologically, residues 197 to 215 are extracellular; it reads KGLGIAIKELFAGKPVLQH. The chain crosses the membrane as a helical span at residues 216–236; the sequence is PLTWILLLSLIVCVSTQINYL. The Cytoplasmic portion of the chain corresponds to 237 to 246; sequence NRALDIFNTS. Residues 247 to 267 traverse the membrane as a helical segment; the sequence is IVTPIYYVFFTTSVITCSAIL. The Extracellular portion of the chain corresponds to 268–278; the sequence is FKEWQDMPVDD. Residues 279 to 299 traverse the membrane as a helical segment; sequence VIGTLSGFFTIIVGIFLLHAF. The Cytoplasmic segment spans residues 300-360; it reads KDVSFSLSSL…SRRNGNLTAF (61 aa).

The protein belongs to the NIPA family.

It is found in the cell membrane. The protein localises to the early endosome. The enzyme catalyses Mg(2+)(in) = Mg(2+)(out). Functionally, acts as a selective Mg(2+) transporter. This Bos taurus (Bovine) protein is Magnesium transporter NIPA2 (NIPA2).